Reading from the N-terminus, the 276-residue chain is Ribosomal RNA small subunit methyltransferase A (276 aa).

N27, L29, G54, E75, D101, and N122 together coordinate S-adenosyl-L-methionine.

Belongs to the class I-like SAM-binding methyltransferase superfamily. rRNA adenine N(6)-methyltransferase family. RsmA subfamily.

It localises to the cytoplasm. The enzyme catalyses adenosine(1518)/adenosine(1519) in 16S rRNA + 4 S-adenosyl-L-methionine = N(6)-dimethyladenosine(1518)/N(6)-dimethyladenosine(1519) in 16S rRNA + 4 S-adenosyl-L-homocysteine + 4 H(+). Specifically dimethylates two adjacent adenosines (A1518 and A1519) in the loop of a conserved hairpin near the 3'-end of 16S rRNA in the 30S particle. May play a critical role in biogenesis of 30S subunits. The chain is Ribosomal RNA small subunit methyltransferase A from Brucella suis (strain ATCC 23445 / NCTC 10510).